The following is a 230-amino-acid chain: Large ribosomal subunit protein uL1 (230 aa).

It belongs to the universal ribosomal protein uL1 family. In terms of assembly, part of the 50S ribosomal subunit.

Binds directly to 23S rRNA. The L1 stalk is quite mobile in the ribosome, and is involved in E site tRNA release. Functionally, protein L1 is also a translational repressor protein, it controls the translation of the L11 operon by binding to its mRNA. This Sulfurimonas denitrificans (strain ATCC 33889 / DSM 1251) (Thiomicrospira denitrificans (strain ATCC 33889 / DSM 1251)) protein is Large ribosomal subunit protein uL1.